Reading from the N-terminus, the 266-residue chain is Apolipoprotein A-I (266 aa).

An N-terminal signal peptide occupies residues 1–18 (MKAVVLTLAVLFLTGSQA). A run of 2 repeats spans residues 67–88 (LKLL…EQIG) and 89–110 (PVTQ…QEMN). A 10 X approximate tandem repeats region spans residues 67–266 (LKLLDNWDSL…DEATKKLNSQ (200 aa)). Met-109 carries the methionine sulfoxide modification. The 3; half-length repeat unit spans residues 111-121 (KDLEEVKKKVQ). 5 consecutive repeat copies span residues 122-143 (PYLD…QKVA), 144-165 (PLGA…EKLS), 166-187 (PLGE…AQLA), 188-209 (PYSE…EGGG), and 210-231 (AALT…EKAK). The 9; half-length repeat unit spans residues 232–242 (PALEDLRQGLL). Copy 10 of the repeat occupies 243-266 (PVLENFRDSLLAAVDEATKKLNSQ).

The protein belongs to the apolipoprotein A1/A4/E family. As to quaternary structure, homodimer. Interacts with APOA1BP and CLU. Component of a sperm activating protein complex (SPAP), consisting of APOA1, an immunoglobulin heavy chain, an immunoglobulin light chain and albumin. Interacts with NDRG1. Interacts with SCGB3A2. Interacts with NAXE and YJEFN3. In terms of processing, glycosylated. Palmitoylated. Post-translationally, phosphorylation sites are present in the extracellular medium.

Its subcellular location is the secreted. Its function is as follows. Participates in the reverse transport of cholesterol from tissues to the liver for excretion by promoting cholesterol efflux from tissues and by acting as a cofactor for the lecithin cholesterol acyltransferase (LCAT). As part of the SPAP complex, activates spermatozoa motility. In Neomonachus schauinslandi (Hawaiian monk seal), this protein is Apolipoprotein A-I (APOA1).